Here is a 191-residue protein sequence, read N- to C-terminus: Putative glutathione-dependent formaldehyde-activating enzyme (191 aa).

The CENP-V/GFA domain occupies F20–D166. Positions 27, 29, 48, 50, 53, 95, and 98 each coordinate Zn(2+).

This sequence belongs to the Gfa family. Requires Zn(2+) as cofactor.

The enzyme catalyses S-(hydroxymethyl)glutathione = glutathione + formaldehyde. It participates in one-carbon metabolism; formaldehyde degradation; formate from formaldehyde (glutathione route): step 1/3. In terms of biological role, catalyzes the condensation of formaldehyde and glutathione to S-hydroxymethylglutathione. The chain is Putative glutathione-dependent formaldehyde-activating enzyme from Colletotrichum graminicola (strain M1.001 / M2 / FGSC 10212) (Maize anthracnose fungus).